The primary structure comprises 253 residues: Cyclin-C1-2 (253 aa).

Belongs to the cyclin family. Cyclin C subfamily.

This is Cyclin-C1-2 (CYCC1-2) from Arabidopsis thaliana (Mouse-ear cress).